Reading from the N-terminus, the 461-residue chain is Cysteine--tRNA ligase (461 aa).

Zn(2+) is bound at residue C31. A 'HIGH' region motif is present at residues 33–43; sequence PTVYDFAHIGN. Zn(2+) contacts are provided by C219, H244, and E248. Residues 277-281 carry the 'KMSKS' region motif; it reads KMSKS. K280 contacts ATP. A compositionally biased stretch (basic and acidic residues) spans 436–452; it reads SEKGIQLKDGKDKETGE. Positions 436–461 are disordered; sequence SEKGIQLKDGKDKETGERTTTWELKR.

Belongs to the class-I aminoacyl-tRNA synthetase family. As to quaternary structure, monomer. Requires Zn(2+) as cofactor.

It is found in the cytoplasm. The catalysed reaction is tRNA(Cys) + L-cysteine + ATP = L-cysteinyl-tRNA(Cys) + AMP + diphosphate. The polypeptide is Cysteine--tRNA ligase (Agrobacterium fabrum (strain C58 / ATCC 33970) (Agrobacterium tumefaciens (strain C58))).